Reading from the N-terminus, the 294-residue chain is Transcription factor nsy-7 (294 aa).

Disordered regions lie at residues Cys-43–Leu-119 and Leu-167–Leu-191. Composition is skewed to polar residues over residues Asp-52 to Glu-63 and Arg-81 to Pro-115. A DNA-binding region (homeobox; atypical) is located at residues Gln-192–Ile-232. The segment at Lys-238–Asn-274 is disordered. Residues Asn-250–Leu-265 are compositionally biased toward basic and acidic residues.

As to expression, expressed widely, including gut, the amphid sheath glial cells, and head and tail neurons including AWC, ASE, and ASH. Expressed in AWC (ON) olfactory neuron but not AWC (OFF).

The protein localises to the nucleus. Transcriptional regulator which binds DNA consensus sequence 5'-CCTTAAC-3'. Plays a role in establishing and maintaining asymmetric cell fates in chemosensory AWC neurons during larval neuronal development. This is achieved by repressing the expression of multiple AWC (OFF) genes, including srsx-3 and hlh-11 in the AWC (ON) neuron. Activates expression of sox-2 in the AWC (ON) neuron. In Caenorhabditis elegans, this protein is Transcription factor nsy-7.